The chain runs to 351 residues: Cysteine-rich receptor-like protein kinase 45 (351 aa).

The Protein kinase domain occupies 37 to 287; the sequence is NDFSELVGRG…EILRYIHIAL (251 aa). ATP-binding positions include 43-51 and Lys65; that span reads VGRGGFGFV. Tyr110 carries the phosphotyrosine modification. Residue Asp162 is the Proton acceptor of the active site. A phosphothreonine mark is found at Thr197 and Thr202. The residue at position 210 (Tyr210) is a Phosphotyrosine.

This sequence belongs to the protein kinase superfamily. Ser/Thr protein kinase family. CRK subfamily. Interacts with CRK36. In terms of processing, autophosphorylated and phosphorylated by CRK36.

It localises to the cytoplasm. It is found in the cytosol. It catalyses the reaction L-seryl-[protein] + ATP = O-phospho-L-seryl-[protein] + ADP + H(+). It carries out the reaction L-threonyl-[protein] + ATP = O-phospho-L-threonyl-[protein] + ADP + H(+). Functionally, forms a complex with CRK36 that may negatively control abscisic acid (ABA) and osmotic stress signal transduction. Involved in plant response to ABA during seed germination, early seedling growth and responses to abiotic stresses by inducing the expression of ABA-responsive genes and stress-inducible genes. Acts as a positive regulator in disease resistance, downstream of NPR1 and WRKY70. The protein is Cysteine-rich receptor-like protein kinase 45 of Arabidopsis thaliana (Mouse-ear cress).